The sequence spans 600 residues: Elongation factor 4 (600 aa).

The region spanning 7–189 (SLIRNFSIIA…ALVQRLPAPT (183 aa)) is the tr-type G domain. GTP-binding positions include 19-24 (DHGKST) and 136-139 (NKID).

The protein belongs to the TRAFAC class translation factor GTPase superfamily. Classic translation factor GTPase family. LepA subfamily.

The protein localises to the cell inner membrane. The enzyme catalyses GTP + H2O = GDP + phosphate + H(+). Its function is as follows. Required for accurate and efficient protein synthesis under certain stress conditions. May act as a fidelity factor of the translation reaction, by catalyzing a one-codon backward translocation of tRNAs on improperly translocated ribosomes. Back-translocation proceeds from a post-translocation (POST) complex to a pre-translocation (PRE) complex, thus giving elongation factor G a second chance to translocate the tRNAs correctly. Binds to ribosomes in a GTP-dependent manner. This is Elongation factor 4 from Gluconobacter oxydans (strain 621H) (Gluconobacter suboxydans).